A 167-amino-acid chain; its full sequence is 2-C-methyl-D-erythritol 2,4-cyclodiphosphate synthase (167 aa).

A divalent metal cation contacts are provided by D10 and H12. Residues 10 to 12 (DVH) and 36 to 37 (HS) contribute to the 4-CDP-2-C-methyl-D-erythritol 2-phosphate site. H44 contacts a divalent metal cation. Residues 58–60 (NIG), 63–67 (FPNTN), 134–137 (TTSE), F141, and R144 each bind 4-CDP-2-C-methyl-D-erythritol 2-phosphate.

Belongs to the IspF family. Homotrimer. A divalent metal cation serves as cofactor.

It carries out the reaction 4-CDP-2-C-methyl-D-erythritol 2-phosphate = 2-C-methyl-D-erythritol 2,4-cyclic diphosphate + CMP. The protein operates within isoprenoid biosynthesis; isopentenyl diphosphate biosynthesis via DXP pathway; isopentenyl diphosphate from 1-deoxy-D-xylulose 5-phosphate: step 4/6. In terms of biological role, involved in the biosynthesis of isopentenyl diphosphate (IPP) and dimethylallyl diphosphate (DMAPP), two major building blocks of isoprenoid compounds. Catalyzes the conversion of 4-diphosphocytidyl-2-C-methyl-D-erythritol 2-phosphate (CDP-ME2P) to 2-C-methyl-D-erythritol 2,4-cyclodiphosphate (ME-CPP) with a corresponding release of cytidine 5-monophosphate (CMP). The chain is 2-C-methyl-D-erythritol 2,4-cyclodiphosphate synthase from Azobacteroides pseudotrichonymphae genomovar. CFP2.